We begin with the raw amino-acid sequence, 349 residues long: Protein RecA (349 aa).

Residue 65–72 (GPESSGKT) participates in ATP binding.

The protein belongs to the RecA family.

Its subcellular location is the cytoplasm. Its function is as follows. Can catalyze the hydrolysis of ATP in the presence of single-stranded DNA, the ATP-dependent uptake of single-stranded DNA by duplex DNA, and the ATP-dependent hybridization of homologous single-stranded DNAs. It interacts with LexA causing its activation and leading to its autocatalytic cleavage. This chain is Protein RecA, found in Clostridium acetobutylicum (strain ATCC 824 / DSM 792 / JCM 1419 / IAM 19013 / LMG 5710 / NBRC 13948 / NRRL B-527 / VKM B-1787 / 2291 / W).